Here is an 80-residue protein sequence, read N- to C-terminus: Translation initiation factor IF-1 (80 aa).

Positions 6 to 80 (RKQEHEKERG…LTRGRIVYRL (75 aa)) constitute an S1-like domain.

It belongs to the IF-1 family. In terms of assembly, component of the 30S ribosomal translation pre-initiation complex which assembles on the 30S ribosome in the order IF-2 and IF-3, IF-1 and N-formylmethionyl-tRNA(fMet); mRNA recruitment can occur at any time during PIC assembly.

It is found in the cytoplasm. One of the essential components for the initiation of protein synthesis. Stabilizes the binding of IF-2 and IF-3 on the 30S subunit to which N-formylmethionyl-tRNA(fMet) subsequently binds. Helps modulate mRNA selection, yielding the 30S pre-initiation complex (PIC). Upon addition of the 50S ribosomal subunit IF-1, IF-2 and IF-3 are released leaving the mature 70S translation initiation complex. The protein is Translation initiation factor IF-1 of Aquifex aeolicus (strain VF5).